The sequence spans 417 residues: Histidine--tRNA ligase (417 aa).

The protein belongs to the class-II aminoacyl-tRNA synthetase family. As to quaternary structure, homodimer.

The protein localises to the cytoplasm. The enzyme catalyses tRNA(His) + L-histidine + ATP = L-histidyl-tRNA(His) + AMP + diphosphate + H(+). This is Histidine--tRNA ligase from Nitratidesulfovibrio vulgaris (strain DP4) (Desulfovibrio vulgaris).